Here is a 273-residue protein sequence, read N- to C-terminus: Shikimate dehydrogenase (NADP(+)) (273 aa).

Shikimate is bound by residues 15-17 and Thr-62; that span reads SKS. Lys-66 serves as the catalytic Proton acceptor. Glu-78 is a binding site for NADP(+). Shikimate is bound by residues Asn-87 and Asp-103. NADP(+) is bound by residues 127 to 131, 151 to 156, and Met-214; these read GAGGA and NRTHDK. Tyr-216 contributes to the shikimate binding site. Gly-238 contributes to the NADP(+) binding site.

Belongs to the shikimate dehydrogenase family. Homodimer.

The enzyme catalyses shikimate + NADP(+) = 3-dehydroshikimate + NADPH + H(+). It participates in metabolic intermediate biosynthesis; chorismate biosynthesis; chorismate from D-erythrose 4-phosphate and phosphoenolpyruvate: step 4/7. Involved in the biosynthesis of the chorismate, which leads to the biosynthesis of aromatic amino acids. Catalyzes the reversible NADPH linked reduction of 3-dehydroshikimate (DHSA) to yield shikimate (SA). In Shewanella denitrificans (strain OS217 / ATCC BAA-1090 / DSM 15013), this protein is Shikimate dehydrogenase (NADP(+)).